A 321-amino-acid chain; its full sequence is S-methyl-5'-thioadenosine phosphorylase (321 aa).

Residues Thr30, Arg73–His74, and Ser106–Ala107 contribute to the phosphate site. A substrate-binding site is contributed by Met215. Residue Ser216 participates in phosphate binding. Asp239–Asp241 is a binding site for substrate.

The protein belongs to the PNP/MTAP phosphorylase family. MTAP subfamily. In terms of assembly, homotrimer.

The protein resides in the cytoplasm. It is found in the nucleus. The catalysed reaction is S-methyl-5'-thioadenosine + phosphate = 5-(methylsulfanyl)-alpha-D-ribose 1-phosphate + adenine. Its pathway is amino-acid biosynthesis; L-methionine biosynthesis via salvage pathway; S-methyl-5-thio-alpha-D-ribose 1-phosphate from S-methyl-5'-thioadenosine (phosphorylase route): step 1/1. Catalyzes the reversible phosphorylation of S-methyl-5'-thioadenosine (MTA) to adenine and 5-methylthioribose-1-phosphate. Involved in the breakdown of MTA, a major by-product of polyamine biosynthesis. Responsible for the first step in the methionine salvage pathway after MTA has been generated from S-adenosylmethionine. Has broad substrate specificity with 6-aminopurine nucleosides as preferred substrates. This chain is S-methyl-5'-thioadenosine phosphorylase, found in Yarrowia lipolytica (strain CLIB 122 / E 150) (Yeast).